The following is a 774-amino-acid chain: Mastermind-like domain-containing protein 1 (774 aa).

Disordered stretches follow at residues 257–279, 310–365, 386–421, 442–473, 525–609, 656–678, and 755–774; these read STGI…SSMA, LAAS…PQSL, ALLS…QPQF, HLMS…QQSF, GMAS…QPDH, PQHQ…VSPS, and LPSC…GNDP. Positions 331–361 are enriched in pro residues; the sequence is LPPPGLSPPYRPVPSPHPPPLPLPPPPPPFS. Positions 386 to 397 are enriched in polar residues; sequence ALLSSMTSSSNA. Over residues 574 to 609 the composition is skewed to low complexity; the sequence is QQPTPTQASSATASSTATATLQLQQQQQQQQQQPDH. The segment covering 656–669 has biased composition (polar residues); the sequence is PQHQHGNSFTSRQD. Ser676 bears the Phosphoserine mark.

It belongs to the mastermind family. Expressed in fetal brain, fetal ovary and fetal testis. Expressed in adult brain, ovary, skin, testis, uterus. Highly expressed in skeletal muscle.

It localises to the nucleus. Transactivates the HES3 promoter independently of NOTCH proteins. HES3 is a non-canonical NOTCH target gene which lacks binding sites for RBPJ. This chain is Mastermind-like domain-containing protein 1 (MAMLD1), found in Homo sapiens (Human).